A 186-amino-acid chain; its full sequence is NADH-ubiquinone oxidoreductase 17.8 kDa subunit, mitochondrial (186 aa).

The transit peptide at 1–26 (MSSFRLGVSRVARQVRAPCVRNTRRY) directs the protein to the mitochondrion. Residues 22–49 (NTRRYASDSHAPADHTHSAAGHGEHHHA) form a disordered region. Positions 26-49 (YASDSHAPADHTHSAAGHGEHHHA) are enriched in basic and acidic residues. The chain crosses the membrane as a helical span at residues 58 to 78 (LGTAFYVIFGAIPAFGALYYF).

Complex I is composed of about 40 different subunits.

The protein localises to the mitochondrion inner membrane. The enzyme catalyses a ubiquinone + NADH + 5 H(+)(in) = a ubiquinol + NAD(+) + 4 H(+)(out). Transfer of electrons from NADH to the respiratory chain. The immediate electron acceptor for the enzyme is believed to be ubiquinone. In Neurospora crassa (strain ATCC 24698 / 74-OR23-1A / CBS 708.71 / DSM 1257 / FGSC 987), this protein is NADH-ubiquinone oxidoreductase 17.8 kDa subunit, mitochondrial (nuo17.8).